Reading from the N-terminus, the 1501-residue chain is MCKMAIIPDWLRSHPHTRKFTHSRPHSSPCRVYSRNGSPNKFRSSSTTAVANPTLSSLDVKRILFQKITDRGDELQKAFQLLDTGQNLTVSKSELRRIITDFLMPLTREQFQDVLAQIPLSTSGTVPYLAFLSRFGGIDLYINGIKRGGGNEMNCCRTLRELEIQVGEKVFKNIKTVMKAFELIDVNKTGLVRPQELRRVLETFCMKLRDEEYEKFSKHYNIHKDTAVDYNVFLKNLSINNDLNLRYCMGNQEVSLENQQAKNSKKERLLGSASSEDIWRNYSLDEIERNFCLQLSKSYEKVEKALSAGDPCKGGYVSFNYLKIVLDTFVYQIPRRIFIQLMKRFGLKATTKINWKQFLTSFHEPQGLQVSSKGPLTKRNSINSRNESHKENIITKLFRHTEDHSASLKKALLIINTKPDGPITREEFRYILNCMAVKLSDSEFKELMQMLDPGDTGVVNTSMFIDLIEENCRMRKTSPCTDAKTPFLLAWDSVEEIVHDTITRNLQAFYNMLRSYDLGDTGRIGRNNFKKIMHVFCPFLTNAHFIKLCSKIQDIGSGRILYKKLLACIGIDGPPTVSPVLVPKDQLLSEHLQKDEQQQPDLSERTKLTEDKTTLTKKMTTEEVIEKFKKCIQQQDPAFKKRFLDFSKEPNGKINVHDFKKVLEDTGMPMDDDQYALLTTKIGFEKEGMSYLDFAAGFEDPPMRGPETTPPQPPTPSKSYVNSHFITAEECLKLFPRRLKESFRDPYSAFFKTDADRDGIINMHDLHRLLLHLLLNLKDDEFERFLGLLGLRLSVTLNFREFQNLCEKRPWRTDEAPQRLIRPKQKVADSELACEQAHQYLVTKAKNRWSDLSKNFLETDNEGNGILRRRDIKNALYGFDIPLTPREFEKLWARYDTEGKGHITYQEFLQKLGINYSPAVHRPCAEDYFNFMGHFTKPQQLQEEMKELQQSTEKAVAARDKLMDRHQDISKAFTKTDQSKTNYISICKMQEVLEECGCSLTEGELTHLLNSWGVSRHDNAINYLDFLRAVENSKSTGAQPKEKEESMPINFATLNPQEAVRKIQEVVESSQLALSTAFSALDKEDTGFVKATEFGQVLKDFCYKLTDNQYHYFLRKLRIHLTPYINWKYFLQNFSCFLEETADEWAEKMPKGPPPTSPKATADRDILARLHKAVTSHYHAITQEFENFDTMKTNTISREEFRAICNRRVQILTDEQFDRLWNEMPVNAKGRLKYPDFLSRFSSETAATPMATGDSAVAQRGSSVPDVSEGTRSALSLPTQELRPGSKSQSHPCTPASTTVIPGTPPLQNCDPIESRLRKRIQGCWRQLLKECKEKDVARQGDINASDFLALVEKFNLDISKEECQQLIIKYDLKSNGKFAYCDFIQSCVLLLKAKESSLMHRMKIQNAHKMKEAGAETPSFYSALLRIQPKIVHCWRPMRRTFKSYDEAGTGLLSVADFRTVLRQYSINLSEEEFFHILEYYDKTLSSKISYNDFLRAFLQ.

The tract at residues 18 to 47 is disordered; the sequence is RKFTHSRPHSSPCRVYSRNGSPNKFRSSST. Positions 35 to 47 are enriched in polar residues; sequence RNGSPNKFRSSST. 7 consecutive EF-hand domains span residues 70-105, 172-207, 297-332, 403-438, 439-474, 504-539, and 634-669; these read DRGDELQKAFQLLDTGQNLTVSKSELRRIITDFLMP, KNIKTVMKAFELIDVNKTGLVRPQELRRVLETFCMK, KSYEKVEKALSAGDPCKGGYVSFNYLKIVLDTFVYQ, DHSASLKKALLIINTKPDGPITREEFRYILNCMAVK, LSDSEFKELMQMLDPGDTGVVNTSMFIDLIEENCRM, RNLQAFYNMLRSYDLGDTGRIGRNNFKKIMHVFCPF, and QQDPAFKKRFLDFSKEPNGKINVHDFKKVLEDTGMP. Residues 699 to 718 form a disordered region; sequence EDPPMRGPETTPPQPPTPSK. 7 EF-hand domains span residues 741-776, 847-882, 883-918, 964-999, 1069-1104, 1176-1211, and 1212-1247; these read ESFRDPYSAFFKTDADRDGIINMHDLHRLLLHLLLN, NRWSDLSKNFLETDNEGNGILRRRDIKNALYGFDIP, LTPREFEKLWARYDTEGKGHITYQEFLQKLGINYSP, DRHQDISKAFTKTDQSKTNYISICKMQEVLEECGCS, SSQLALSTAFSALDKEDTGFVKATEFGQVLKDFCYK, SHYHAITQEFENFDTMKTNTISREEFRAICNRRVQI, and LTDEQFDRLWNEMPVNAKGRLKYPDFLSRFSSETAA. Residues D754, D756, D758, and D765 each contribute to the Ca(2+) site. T884 is subject to Phosphothreonine. A disordered region spans residues 1246-1307; that stretch reads AATPMATGDS…TTVIPGTPPL (62 aa). 2 stretches are compositionally biased toward polar residues: residues 1270-1279 and 1286-1301; these read GTRSALSLPT and SKSQSHPCTPASTTVI. Phosphoserine is present on S1290. A phosphothreonine mark is found at T1294 and T1304. The interval 1303–1501 is interaction with PARK7; sequence GTPPLQNCDP…YNDFLRAFLQ (199 aa). EF-hand domains are found at residues 1359-1394, 1434-1469, and 1470-1501; these read ISKEECQQLIIKYDLKSNGKFAYCDFIQSCVLLLKA, HCWRPMRRTFKSYDEAGTGLLSVADFRTVLRQYSIN, and LSEEEFFHILEYYDKTLSSKISYNDFLRAFLQ. The segment at 1407–1501 is interaction with AR; sequence NAHKMKEAGA…YNDFLRAFLQ (95 aa).

Microtubule inner protein component of sperm flagellar doublet microtubules. Binds PARK7. Part of a ternary complex containing PARK7, EFCAB6/DJBP and AR. As to expression, specifically expressed in the testis.

The protein localises to the nucleus. It localises to the cytoplasm. It is found in the cytoskeleton. The protein resides in the flagellum axoneme. Functionally, negatively regulates the androgen receptor by recruiting histone deacetylase complex, and protein DJ-1 antagonizes this inhibition by abrogation of this complex. Microtubule inner protein (MIP) part of the dynein-decorated doublet microtubules (DMTs) in cilia axoneme, which is required for motile cilia beating. The chain is EF-hand calcium-binding domain-containing protein 6 from Homo sapiens (Human).